The primary structure comprises 248 residues: 1-(5-phosphoribosyl)-5-[(5-phosphoribosylamino)methylideneamino] imidazole-4-carboxamide isomerase (248 aa).

Aspartate 8 acts as the Proton acceptor in catalysis. The Proton donor role is filled by aspartate 129.

It belongs to the HisA/HisF family.

It is found in the cytoplasm. The enzyme catalyses 1-(5-phospho-beta-D-ribosyl)-5-[(5-phospho-beta-D-ribosylamino)methylideneamino]imidazole-4-carboxamide = 5-[(5-phospho-1-deoxy-D-ribulos-1-ylimino)methylamino]-1-(5-phospho-beta-D-ribosyl)imidazole-4-carboxamide. It functions in the pathway amino-acid biosynthesis; L-histidine biosynthesis; L-histidine from 5-phospho-alpha-D-ribose 1-diphosphate: step 4/9. This is 1-(5-phosphoribosyl)-5-[(5-phosphoribosylamino)methylideneamino] imidazole-4-carboxamide isomerase from Sinorhizobium medicae (strain WSM419) (Ensifer medicae).